The sequence spans 82 residues: Small ribosomal subunit protein bS16 (82 aa).

It belongs to the bacterial ribosomal protein bS16 family.

The sequence is that of Small ribosomal subunit protein bS16 from Pseudoalteromonas translucida (strain TAC 125).